The sequence spans 389 residues: GRFGGKYVPETLMHALTELENAFHALATDDEFQKELDGILKDYVGRESPLYFAERLTEHYKRADGTGPLIYLKREDLNHRGAHKINNAVAQALLAKRLGKQRIIAETGAGQHGVATATVCARFGLQCIIYMGAQDMERQALNVFRMKLLGAEVRAVHSGTATLKDATSEAIRDWVTNVETTHYILGSVAGPHPYPMMVREFHKVIGKETRRQAMHKWGGKPDVLVACVGGGSNAMGLFHEFVEDQDVRLIGVEAAGHGVDTDKHAATLTKGQVGVLHGSMSYLLQDDDGQVIEPHSISAGLDYPGVGPEHSFLKDIGRAEYDSVTDQEALDAFKRVSRLEGIIPALETSHALAYLEKLCPTLPDGVRVVLNCSGRGDKDVHTASKYLDV.

Lysine 84 carries the N6-(pyridoxal phosphate)lysine modification.

It belongs to the TrpB family. In terms of assembly, tetramer of two alpha and two beta chains. It depends on pyridoxal 5'-phosphate as a cofactor.

The protein resides in the plastid. Its subcellular location is the chloroplast. The enzyme catalyses (1S,2R)-1-C-(indol-3-yl)glycerol 3-phosphate + L-serine = D-glyceraldehyde 3-phosphate + L-tryptophan + H2O. It functions in the pathway amino-acid biosynthesis; L-tryptophan biosynthesis; L-tryptophan from chorismate: step 5/5. Its function is as follows. The beta subunit is responsible for the synthesis of L-tryptophan from indole and L-serine. The protein is Tryptophan synthase beta chain 1 (TSB1) of Zea mays (Maize).